Consider the following 71-residue polypeptide: Small ribosomal subunit protein bS21 (71 aa).

The tract at residues 37–71 (HYEKPTAERKRKKAAAVKRHMKKLSRDNARRVKLY) is disordered. The segment covering 45-59 (RKRKKAAAVKRHMKK) has biased composition (basic residues). A compositionally biased stretch (basic and acidic residues) spans 60–71 (LSRDNARRVKLY).

This sequence belongs to the bacterial ribosomal protein bS21 family.

This Pseudoalteromonas translucida (strain TAC 125) protein is Small ribosomal subunit protein bS21.